We begin with the raw amino-acid sequence, 390 residues long: Chorismate synthase (390 aa).

2 residues coordinate NADP(+): Arg-40 and Arg-46. FMN-binding positions include 128 to 130 (RAS), 251 to 252 (QA), Gly-296, 311 to 315 (KPIPT), and Arg-339.

It belongs to the chorismate synthase family. Homotetramer. Requires FMNH2 as cofactor.

It carries out the reaction 5-O-(1-carboxyvinyl)-3-phosphoshikimate = chorismate + phosphate. It functions in the pathway metabolic intermediate biosynthesis; chorismate biosynthesis; chorismate from D-erythrose 4-phosphate and phosphoenolpyruvate: step 7/7. In terms of biological role, catalyzes the anti-1,4-elimination of the C-3 phosphate and the C-6 proR hydrogen from 5-enolpyruvylshikimate-3-phosphate (EPSP) to yield chorismate, which is the branch point compound that serves as the starting substrate for the three terminal pathways of aromatic amino acid biosynthesis. This reaction introduces a second double bond into the aromatic ring system. The chain is Chorismate synthase from Sulfurihydrogenibium sp. (strain YO3AOP1).